A 375-amino-acid chain; its full sequence is 23S rRNA (uracil(747)-C(5))-methyltransferase RlmC (375 aa).

[4Fe-4S] cluster is bound by residues cysteine 3, cysteine 11, cysteine 14, and cysteine 87. S-adenosyl-L-methionine contacts are provided by glutamine 212, phenylalanine 241, glutamate 262, and asparagine 307. Cysteine 334 (nucleophile) is an active-site residue.

Belongs to the class I-like SAM-binding methyltransferase superfamily. RNA M5U methyltransferase family. RlmC subfamily.

The catalysed reaction is uridine(747) in 23S rRNA + S-adenosyl-L-methionine = 5-methyluridine(747) in 23S rRNA + S-adenosyl-L-homocysteine + H(+). Functionally, catalyzes the formation of 5-methyl-uridine at position 747 (m5U747) in 23S rRNA. This Salmonella typhi protein is 23S rRNA (uracil(747)-C(5))-methyltransferase RlmC.